The primary structure comprises 503 residues: uncharacterized protein (503 aa).

12 helical membrane passes run 20-40, 43-63, 106-126, 138-158, 166-186, 215-235, 249-269, 301-321, 359-379, 405-425, 443-463, and 468-488; these read FIAF…VLTM, LGPF…GVML, VSLT…LSFA, LIGL…ISLF, AILF…ILGI, VIST…LTAI, LLMF…ISGI, YLGI…SLAS, VWAS…VPFL, LAVL…FMIL, GVSF…ITAW, and TFKL…FIHS.

It to M.genitalium MG225.

It localises to the cell membrane. This is an uncharacterized protein from Mycoplasma pneumoniae (strain ATCC 29342 / M129 / Subtype 1) (Mycoplasmoides pneumoniae).